A 280-amino-acid polypeptide reads, in one-letter code: Urease accessory protein UreD 1 (280 aa).

This sequence belongs to the UreD family. As to quaternary structure, ureD, UreF and UreG form a complex that acts as a GTP-hydrolysis-dependent molecular chaperone, activating the urease apoprotein by helping to assemble the nickel containing metallocenter of UreC. The UreE protein probably delivers the nickel.

The protein resides in the cytoplasm. Functionally, required for maturation of urease via the functional incorporation of the urease nickel metallocenter. This chain is Urease accessory protein UreD 1, found in Bradyrhizobium sp. (strain BTAi1 / ATCC BAA-1182).